We begin with the raw amino-acid sequence, 403 residues long: Na(+)-translocating NADH-quinone reductase subunit B (403 aa).

9 consecutive transmembrane segments (helical) span residues 56-76, 121-141, 164-184, 225-245, 260-280, 287-307, 312-332, 348-368, and 371-391; these read MMII…YNVG, AYFL…EVLF, LPPS…VVLG, GFAG…NILG, GSMG…LLLT, IVAG…AIGS, MFAM…GMIF, WLFG…NPAF, and GMML…HFVV. Position 230 is an FMN phosphoryl threonine (Thr230).

Belongs to the NqrB/RnfD family. Composed of six subunits; NqrA, NqrB, NqrC, NqrD, NqrE and NqrF. The cofactor is FMN.

It localises to the cell inner membrane. The catalysed reaction is a ubiquinone + n Na(+)(in) + NADH + H(+) = a ubiquinol + n Na(+)(out) + NAD(+). Its function is as follows. NQR complex catalyzes the reduction of ubiquinone-1 to ubiquinol by two successive reactions, coupled with the transport of Na(+) ions from the cytoplasm to the periplasm. NqrA to NqrE are probably involved in the second step, the conversion of ubisemiquinone to ubiquinol. The chain is Na(+)-translocating NADH-quinone reductase subunit B from Pseudomonas aeruginosa (strain LESB58).